A 929-amino-acid chain; its full sequence is ATP-dependent DNA helicase PIF1 (929 aa).

Residues 1–52 (MLRRLLQPAYNVALSGTSASTLPRKSASVGLVRTALMPVDYNAGALFCAMRF) constitute a mitochondrion transit peptide. The segment at 55-89 (GTEKERKREPKRGSKRRSKATTTLSTPTDAQTSVT) is disordered. Positions 56-66 (TEKERKREPKR) are enriched in basic and acidic residues. The segment covering 74–89 (ATTTLSTPTDAQTSVT) has biased composition (polar residues). 302–309 (GSAGTGKT) lines the ATP pocket. The DNA-binding element occupies 776 to 796 (HLLYVAMSRVRNPEQLSMSSF). The segment at 902–929 (HERRQKKMAVEGAKQTDTTKASSGESLE) is disordered. Over residues 916-929 (QTDTTKASSGESLE) the composition is skewed to polar residues.

Belongs to the helicase family. PIF1 subfamily. In terms of assembly, monomer. It depends on Mg(2+) as a cofactor.

The protein localises to the mitochondrion. The catalysed reaction is Couples ATP hydrolysis with the unwinding of duplex DNA at the replication fork by translocating in the 5'-3' direction. This creates two antiparallel DNA single strands (ssDNA). The leading ssDNA polymer is the template for DNA polymerase III holoenzyme which synthesizes a continuous strand.. It catalyses the reaction ATP + H2O = ADP + phosphate + H(+). Functionally, DNA-dependent ATPase and probable 5'-3' DNA helicase required for the maintenance of mitochondrial (kinetoplast) genome stability. Essential for replication of kinetoplast minicircles. Involved in the segregation of minicircle progeny. The polypeptide is ATP-dependent DNA helicase PIF1 (Trypanosoma brucei brucei (strain 927/4 GUTat10.1)).